We begin with the raw amino-acid sequence, 57 residues long: Dendroaspis polylepis MT9 (57 aa).

4 disulfides stabilise this stretch: Cys-3–Cys-22, Cys-17–Cys-36, Cys-38–Cys-49, and Cys-50–Cys-55.

Belongs to the three-finger toxin family. Short-chain subfamily. As to expression, expressed by the venom gland.

Its subcellular location is the secreted. In terms of biological role, when tested on muscarinic GPCR, specifically antagonizes the type 2 receptor (CHRM2) subtype (Ki/Kd=120-399 nM). Ex vivo, it reverses the M2R-agonist-induced relaxation in rat and human arteries. This chain is Dendroaspis polylepis MT9, found in Dendroaspis polylepis polylepis (Black mamba).